We begin with the raw amino-acid sequence, 304 residues long: D-alanine--D-alanine ligase (304 aa).

The region spanning 100-301 (KLVALQSGIP…FGEFLEDLIK (202 aa)) is the ATP-grasp domain. 129–184 (ERKLGSPFIVKPCDVGSTIGLSLVRSASEYEVALEEAFRFSDRLLLEEFIDGFEVT) is an ATP binding site. Aspartate 256, glutamate 268, and asparagine 270 together coordinate Mg(2+).

Belongs to the D-alanine--D-alanine ligase family. The cofactor is Mg(2+). Mn(2+) serves as cofactor.

It is found in the cytoplasm. It carries out the reaction 2 D-alanine + ATP = D-alanyl-D-alanine + ADP + phosphate + H(+). The protein operates within cell wall biogenesis; peptidoglycan biosynthesis. Functionally, cell wall formation. The polypeptide is D-alanine--D-alanine ligase (Coprothermobacter proteolyticus (strain ATCC 35245 / DSM 5265 / OCM 4 / BT)).